Reading from the N-terminus, the 316-residue chain is 4-hydroxy-3-methylbut-2-enyl diphosphate reductase (316 aa).

Residue cysteine 12 participates in [4Fe-4S] cluster binding. Histidine 41 and histidine 74 together coordinate (2E)-4-hydroxy-3-methylbut-2-enyl diphosphate. Histidine 41 and histidine 74 together coordinate dimethylallyl diphosphate. Isopentenyl diphosphate is bound by residues histidine 41 and histidine 74. Residue cysteine 96 participates in [4Fe-4S] cluster binding. Histidine 124 provides a ligand contact to (2E)-4-hydroxy-3-methylbut-2-enyl diphosphate. Histidine 124 contacts dimethylallyl diphosphate. Histidine 124 provides a ligand contact to isopentenyl diphosphate. Glutamate 126 acts as the Proton donor in catalysis. (2E)-4-hydroxy-3-methylbut-2-enyl diphosphate is bound at residue threonine 169. [4Fe-4S] cluster is bound at residue cysteine 199. (2E)-4-hydroxy-3-methylbut-2-enyl diphosphate is bound by residues serine 227, serine 228, asparagine 229, and serine 271. Dimethylallyl diphosphate is bound by residues serine 227, serine 228, asparagine 229, and serine 271. Isopentenyl diphosphate-binding residues include serine 227, serine 228, asparagine 229, and serine 271.

This sequence belongs to the IspH family. [4Fe-4S] cluster serves as cofactor.

The catalysed reaction is isopentenyl diphosphate + 2 oxidized [2Fe-2S]-[ferredoxin] + H2O = (2E)-4-hydroxy-3-methylbut-2-enyl diphosphate + 2 reduced [2Fe-2S]-[ferredoxin] + 2 H(+). It catalyses the reaction dimethylallyl diphosphate + 2 oxidized [2Fe-2S]-[ferredoxin] + H2O = (2E)-4-hydroxy-3-methylbut-2-enyl diphosphate + 2 reduced [2Fe-2S]-[ferredoxin] + 2 H(+). It functions in the pathway isoprenoid biosynthesis; dimethylallyl diphosphate biosynthesis; dimethylallyl diphosphate from (2E)-4-hydroxy-3-methylbutenyl diphosphate: step 1/1. It participates in isoprenoid biosynthesis; isopentenyl diphosphate biosynthesis via DXP pathway; isopentenyl diphosphate from 1-deoxy-D-xylulose 5-phosphate: step 6/6. In terms of biological role, catalyzes the conversion of 1-hydroxy-2-methyl-2-(E)-butenyl 4-diphosphate (HMBPP) into a mixture of isopentenyl diphosphate (IPP) and dimethylallyl diphosphate (DMAPP). Acts in the terminal step of the DOXP/MEP pathway for isoprenoid precursor biosynthesis. The protein is 4-hydroxy-3-methylbut-2-enyl diphosphate reductase of Xanthomonas campestris pv. campestris (strain 8004).